Here is a 290-residue protein sequence, read N- to C-terminus: Arylamine N-acetyltransferase 1 (290 aa).

The residue at position 1 (methionine 1) is an N-acetylmethionine. Catalysis depends on cysteine 68, which acts as the Acyl-thioester intermediate. Residue serine 103 coordinates CoA. Substrate is bound at residue 106–107 (VH). Active-site residues include histidine 107 and aspartate 122. Tyrosine 208 contributes to the CoA binding site.

The protein belongs to the arylamine N-acetyltransferase family.

It is found in the cytoplasm. The catalysed reaction is an arylamine + acetyl-CoA = an N-acetylarylamine + CoA. Functionally, participates in the detoxification of a plethora of hydrazine and arylamine drugs. Acetylates both arylamines and arylalkylamines. In Rattus norvegicus (Rat), this protein is Arylamine N-acetyltransferase 1 (Nat1).